Consider the following 229-residue polypeptide: Heptaprenylglyceryl phosphate synthase (229 aa).

Position 12 (lysine 12) interacts with sn-glycerol 1-phosphate. 2 residues coordinate Mg(2+): aspartate 14 and threonine 40. Sn-glycerol 1-phosphate is bound by residues 159–164 (YIEYSG), glycine 189, and 209–210 (GN).

Belongs to the GGGP/HepGP synthase family. Group I subfamily. As to quaternary structure, homodimer. Mg(2+) serves as cofactor.

It catalyses the reaction sn-glycerol 1-phosphate + all-trans-heptaprenyl diphosphate = 3-heptaprenyl-sn-glycero-1-phosphate + diphosphate. The protein operates within membrane lipid metabolism; glycerophospholipid metabolism. In terms of biological role, prenyltransferase that catalyzes in vivo the transfer of the heptaprenyl moiety of heptaprenyl pyrophosphate (HepPP; 35 carbon atoms) to the C3 hydroxyl of sn-glycerol-1-phosphate (G1P), producing heptaprenylglyceryl phosphate (HepGP). This reaction is an ether-bond-formation step in the biosynthesis of archaea-type G1P-based membrane lipids found in Bacillales. In Oceanobacillus iheyensis (strain DSM 14371 / CIP 107618 / JCM 11309 / KCTC 3954 / HTE831), this protein is Heptaprenylglyceryl phosphate synthase.